Reading from the N-terminus, the 409-residue chain is MSATNSASTLITNIGELMTQDMEHRVLKDAAIVIEGERIAWLGSTKDAPAADENIDAQGRAVLPGWVDSHSHLVFAGDRTAEFEARMAGESYSAGGIAVTTGATRSVSDDELTRLVRDRVAEAVSQGTTYLESKTGYGLDVENEARSARIAAAEVDEVTYLGAHLVPDGSDPEEYTDLVCGPMLDAVLPHVRWADVFCERGAFTEDQSRRVLRAARDAGLGLRVHGNQLGEGPGVALAVEFAAASVDHVNYLSDKDVLALAGTWAGWDPATGAGTKGTVATCLPACDLSTRQPLAPGRELIDAGVQIALAANCNPGTSYTSSMAFCVTTAVLQMHLSVHEAVRAATYGGALALGRESGNDVDGERAVGSLAVGHRADLHMLKAPSATHLAYRPGIPLTGSVWRAGVRVV.

The Fe(3+) site is built by His70 and His72. The Zn(2+) site is built by His70 and His72. 4-imidazolone-5-propanoate-binding residues include Arg79, Tyr137, and His164. Residue Tyr137 participates in N-formimidoyl-L-glutamate binding. His225 provides a ligand contact to Fe(3+). His225 serves as a coordination point for Zn(2+). Gln228 lines the 4-imidazolone-5-propanoate pocket. N-formimidoyl-L-glutamate is bound by residues Asn314 and Gly316. A 4-imidazolone-5-propanoate-binding site is contributed by Thr317.

It belongs to the metallo-dependent hydrolases superfamily. HutI family. It depends on Zn(2+) as a cofactor. Requires Fe(3+) as cofactor.

Its subcellular location is the cytoplasm. It carries out the reaction 4-imidazolone-5-propanoate + H2O = N-formimidoyl-L-glutamate. It participates in amino-acid degradation; L-histidine degradation into L-glutamate; N-formimidoyl-L-glutamate from L-histidine: step 3/3. In terms of biological role, catalyzes the hydrolytic cleavage of the carbon-nitrogen bond in imidazolone-5-propanoate to yield N-formimidoyl-L-glutamate. It is the third step in the universal histidine degradation pathway. The sequence is that of Imidazolonepropionase from Paenarthrobacter aurescens (strain TC1).